Reading from the N-terminus, the 244-residue chain is Mediator of RNA polymerase II transcription subunit 8 (244 aa).

The stretch at 6 to 30 forms a coiled coil; it reads QEQLKTLEQSRQRLVQLTRSLASLI.

This sequence belongs to the Mediator complex subunit 8 family. As to quaternary structure, component of the Mediator complex.

The protein localises to the nucleus. In terms of biological role, component of the Mediator complex, a coactivator involved in the regulated transcription of nearly all RNA polymerase II-dependent genes. Mediator functions as a bridge to convey information from gene-specific regulatory proteins to the basal RNA polymerase II transcription machinery. Mediator is recruited to promoters by direct interactions with regulatory proteins and serves as a scaffold for the assembly of a functional preinitiation complex with RNA polymerase II and the general transcription factors. The protein is Mediator of RNA polymerase II transcription subunit 8 (med8) of Aspergillus oryzae (strain ATCC 42149 / RIB 40) (Yellow koji mold).